Reading from the N-terminus, the 494-residue chain is Neuronal pentraxin receptor (494 aa).

Over 1-2 (MK) the chain is Cytoplasmic. A helical; Signal-anchor for type II membrane protein transmembrane segment spans residues 3 to 23 (FLAVLLAAGMLAFLGAVICII). Residues 24 to 494 (ASVPLAASPA…FDVCKRRAKA (471 aa)) lie on the Extracellular side of the membrane. Positions 37 to 80 (PGGTDNASAASAAGAPGPQRSLSALQGAGGSAGPSVLPGEPAAS) are disordered. N42 is a glycosylation site (N-linked (GlcNAc...) asparagine). Composition is skewed to low complexity over residues 43–62 (ASAASAAGAPGPQRSLSALQ) and 69–80 (GPSVLPGEPAAS). Residue N211 is glycosylated (N-linked (GlcNAc...) asparagine). The Pentraxin (PTX) domain occupies 286-488 (DAFKVSIPIR…GAKKAAFDVC (203 aa)). C316 and C377 form a disulfide bridge. Ca(2+)-binding residues include N341, E419, Q420, D421, and Q431. N457 carries an N-linked (GlcNAc...) asparagine glycan.

In terms of assembly, interacts with KLHL2. Heteropentamer with NPTX1 and/or NPTX2. Also binds taipoxin-associated calcium-binding protein 49 (TCBP49/RCN2). Ca(2+) serves as cofactor. Post-translationally, N-glycosylated. In terms of processing, ubiquitinated by a cullin-RING-based BCR (BTB-CUL3-RBX1) E3 ubiquitin-protein ligase complex containing KLHL2. Brain specific.

It localises to the membrane. May be involved in mediating uptake of synaptic material during synapse remodeling or in mediating the synaptic clustering of AMPA glutamate receptors at a subset of excitatory synapses. This chain is Neuronal pentraxin receptor (Nptxr), found in Rattus norvegicus (Rat).